The chain runs to 226 residues: tRNA (guanine-N(7)-)-methyltransferase (226 aa).

Residues glutamate 59, glutamate 84, aspartate 111, and aspartate 134 each coordinate S-adenosyl-L-methionine. Residue aspartate 134 is part of the active site. Lysine 138 contributes to the substrate binding site. An interaction with RNA region spans residues 140 to 145 (RHNKRR). Residues aspartate 170 and 205 to 208 (TKFE) each bind substrate.

It belongs to the class I-like SAM-binding methyltransferase superfamily. TrmB family.

The enzyme catalyses guanosine(46) in tRNA + S-adenosyl-L-methionine = N(7)-methylguanosine(46) in tRNA + S-adenosyl-L-homocysteine. The protein operates within tRNA modification; N(7)-methylguanine-tRNA biosynthesis. Catalyzes the formation of N(7)-methylguanine at position 46 (m7G46) in tRNA. The sequence is that of tRNA (guanine-N(7)-)-methyltransferase from Chromobacterium violaceum (strain ATCC 12472 / DSM 30191 / JCM 1249 / CCUG 213 / NBRC 12614 / NCIMB 9131 / NCTC 9757 / MK).